A 191-amino-acid chain; its full sequence is Flagellar transcriptional regulator FlhC (191 aa).

Zn(2+) is bound by residues Cys137, Cys140, Cys157, and Cys160.

This sequence belongs to the FlhC family. As to quaternary structure, heterohexamer composed of two FlhC and four FlhD subunits. Each FlhC binds a FlhD dimer, forming a heterotrimer, and a hexamer assembles by dimerization of two heterotrimers. It depends on Zn(2+) as a cofactor.

It localises to the cytoplasm. Its function is as follows. Functions in complex with FlhD as a master transcriptional regulator that regulates transcription of several flagellar and non-flagellar operons by binding to their promoter region. Activates expression of class 2 flagellar genes, including fliA, which is a flagellum-specific sigma factor that turns on the class 3 genes. Also regulates genes whose products function in a variety of physiological pathways. The protein is Flagellar transcriptional regulator FlhC of Nitrosomonas eutropha (strain DSM 101675 / C91 / Nm57).